We begin with the raw amino-acid sequence, 611 residues long: Protein Spindly (611 aa).

Residues 1-288 (MEESETVLKL…QFQSLQKQHA (288 aa)) adopt a coiled-coil conformation. A compositionally biased stretch (basic and acidic residues) spans 499–511 (LKEDSSLSTKEQD). The interval 499-611 (LKEDSSLSTK…PAATTQCPQQ (113 aa)) is disordered. Residues 549–567 (RNTNNCSVTSTSPRSASEE) are compositionally biased toward polar residues. Basic and acidic residues predominate over residues 570–583 (SESKRFDEEQEKRK).

This sequence belongs to the Spindly family.

The protein localises to the chromosome. Its subcellular location is the centromere. It is found in the kinetochore. Required for the localization of dynein and dynactin to the mitotic kintochore. Dynein is believed to control the initial lateral interaction between the kinetochore and spindle microtubules and to facilitate the subsequent formation of end-on kinetochore-microtubule attachments mediated by the NDC80 complex. May act as an adapter protein linking the dynein motor complex to various cargos. In Xenopus tropicalis (Western clawed frog), this protein is Protein Spindly (spdl1).